A 492-amino-acid chain; its full sequence is N-succinylglutamate 5-semialdehyde dehydrogenase (492 aa).

220-225 is a binding site for NAD(+); sequence GSAGTG. Catalysis depends on residues Glu243 and Cys277.

It belongs to the aldehyde dehydrogenase family. AstD subfamily.

The catalysed reaction is N-succinyl-L-glutamate 5-semialdehyde + NAD(+) + H2O = N-succinyl-L-glutamate + NADH + 2 H(+). It functions in the pathway amino-acid degradation; L-arginine degradation via AST pathway; L-glutamate and succinate from L-arginine: step 4/5. Catalyzes the NAD-dependent reduction of succinylglutamate semialdehyde into succinylglutamate. The chain is N-succinylglutamate 5-semialdehyde dehydrogenase from Cronobacter sakazakii (strain ATCC BAA-894) (Enterobacter sakazakii).